We begin with the raw amino-acid sequence, 250 residues long: Non-specific acid phosphatase (250 aa).

Positions 1-20 (MKSRYLVFFLPLIVAKYTSA) are cleaved as a signal peptide.

This sequence belongs to the class A bacterial acid phosphatase family. As to quaternary structure, homodimer.

Its subcellular location is the periplasm. It catalyses the reaction a phosphate monoester + H2O = an alcohol + phosphate. The protein is Non-specific acid phosphatase (phoN) of Salmonella typhimurium (strain LT2 / SGSC1412 / ATCC 700720).